A 110-amino-acid polypeptide reads, in one-letter code: Hydrogenase maturation factor HypA (110 aa).

H2 is a binding site for Ni(2+). Residues C70, C73, C86, and C89 each contribute to the Zn(2+) site.

Belongs to the HypA/HybF family.

Involved in the maturation of [NiFe] hydrogenases. Required for nickel insertion into the metal center of the hydrogenase. The sequence is that of Hydrogenase maturation factor HypA from Geobacter metallireducens (strain ATCC 53774 / DSM 7210 / GS-15).